Here is a 103-residue protein sequence, read N- to C-terminus: Large ribosomal subunit protein bL21 (103 aa).

The protein belongs to the bacterial ribosomal protein bL21 family. In terms of assembly, part of the 50S ribosomal subunit. Contacts protein L20.

In terms of biological role, this protein binds to 23S rRNA in the presence of protein L20. The polypeptide is Large ribosomal subunit protein bL21 (Aeromonas hydrophila subsp. hydrophila (strain ATCC 7966 / DSM 30187 / BCRC 13018 / CCUG 14551 / JCM 1027 / KCTC 2358 / NCIMB 9240 / NCTC 8049)).